The following is a 525-amino-acid chain: GMP synthase [glutamine-hydrolyzing] (525 aa).

The Glutamine amidotransferase type-1 domain occupies 9–207 (RILILDFGSQ…VLDICACEAL (199 aa)). Cys86 acts as the Nucleophile in catalysis. Catalysis depends on residues His181 and Glu183. The 193-residue stretch at 208–400 (WTPATIIEDA…LGLPYDMLYR (193 aa)) folds into the GMPS ATP-PPase domain. Residue 235–241 (SGGVDSS) participates in ATP binding.

Homodimer.

The enzyme catalyses XMP + L-glutamine + ATP + H2O = GMP + L-glutamate + AMP + diphosphate + 2 H(+). The protein operates within purine metabolism; GMP biosynthesis; GMP from XMP (L-Gln route): step 1/1. Catalyzes the synthesis of GMP from XMP. The polypeptide is GMP synthase [glutamine-hydrolyzing] (Yersinia enterocolitica serotype O:8 / biotype 1B (strain NCTC 13174 / 8081)).